Reading from the N-terminus, the 443-residue chain is ATP-dependent protease ATPase subunit HslU (443 aa).

ATP-binding positions include Val-18 and 60 to 65; that span reads GVGKTE. Residues 136 to 158 are disordered; sequence LPPPRDFNEDSQRTNADSSTRQL. A compositionally biased stretch (polar residues) spans 148 to 157; the sequence is RTNADSSTRQ. ATP-binding residues include Asp-256, Glu-321, and Arg-393.

It belongs to the ClpX chaperone family. HslU subfamily. A double ring-shaped homohexamer of HslV is capped on each side by a ring-shaped HslU homohexamer. The assembly of the HslU/HslV complex is dependent on binding of ATP.

Its subcellular location is the cytoplasm. Functionally, ATPase subunit of a proteasome-like degradation complex; this subunit has chaperone activity. The binding of ATP and its subsequent hydrolysis by HslU are essential for unfolding of protein substrates subsequently hydrolyzed by HslV. HslU recognizes the N-terminal part of its protein substrates and unfolds these before they are guided to HslV for hydrolysis. This chain is ATP-dependent protease ATPase subunit HslU, found in Marinobacter nauticus (strain ATCC 700491 / DSM 11845 / VT8) (Marinobacter aquaeolei).